The sequence spans 467 residues: MRLRLPVVCFLWEIAMIVLFGIFVRYNDEADPHWSEFMKAQNITSDIQNDYYFRYPSFQDVHVMIFVGFGFLMTFLKRYGFGSVAFNFLLAAFGIQWAILMQGWFHTFKNGKILIGVESLINADFCVGSVCIAFGAILGKVSPVQIMVMTLFQVTLFAVNEWILLNLLHVNDAGGSMTIHTFGAYFGLTVAWILNRPRLKQTNDKEGSVYVSDLFSMIGTLFLWMFWPSFNSAVSYHGDAQHRAAINTYCSLAACVLTTVAISSVVNKKGKLEMVHIQNATLAGGVAVGTAAEMMLTPYGSLIVGFICGIVSTLGFTYCSPFLSNKLRLHDTCGIHNLHAMPGLIGGIVGAVTAACATEAVYTADGLKKMFRFEGDYATRTPSMQGGYQAAGLCVSLAFGLVGGTVVGCILKLPIWGDPSDENCFDDEVYWELPEEDEEEHLGAANQYVTHLPENFKLPDRTEVAFK.

Residues 1 to 3 lie on the Cytoplasmic side of the membrane; sequence MRL. Residues 4-24 traverse the membrane as a helical segment; it reads RLPVVCFLWEIAMIVLFGIFV. Topologically, residues 25–55 are extracellular; sequence RYNDEADPHWSEFMKAQNITSDIQNDYYFRY. Asn42 is a glycosylation site (N-linked (GlcNAc...) asparagine). Residues 56–76 traverse the membrane as a helical segment; sequence PSFQDVHVMIFVGFGFLMTFL. The Cytoplasmic segment spans residues 77–80; the sequence is KRYG. The helical transmembrane segment at 81 to 101 threads the bilayer; sequence FGSVAFNFLLAAFGIQWAILM. Over 102–119 the chain is Extracellular; sequence QGWFHTFKNGKILIGVES. Residues 120–139 form a helical membrane-spanning segment; that stretch reads LINADFCVGSVCIAFGAILG. The Cytoplasmic segment spans residues 140–145; sequence KVSPVQ. The helical transmembrane segment at 146–168 threads the bilayer; sequence IMVMTLFQVTLFAVNEWILLNLL. Residues 169-173 are Extracellular-facing; the sequence is HVNDA. The helical transmembrane segment at 174–194 threads the bilayer; sequence GGSMTIHTFGAYFGLTVAWIL. The Cytoplasmic portion of the chain corresponds to 195 to 213; sequence NRPRLKQTNDKEGSVYVSD. A helical membrane pass occupies residues 214–234; it reads LFSMIGTLFLWMFWPSFNSAV. At 235 to 245 the chain is on the extracellular side; that stretch reads SYHGDAQHRAA. A helical membrane pass occupies residues 246–266; sequence INTYCSLAACVLTTVAISSVV. The Cytoplasmic portion of the chain corresponds to 267–271; that stretch reads NKKGK. Residues 272-292 traverse the membrane as a helical segment; that stretch reads LEMVHIQNATLAGGVAVGTAA. Topologically, residues 293–295 are extracellular; sequence EMM. Residues 296 to 316 traverse the membrane as a helical segment; sequence LTPYGSLIVGFICGIVSTLGF. The Cytoplasmic segment spans residues 317–337; it reads TYCSPFLSNKLRLHDTCGIHN. A helical transmembrane segment spans residues 338–358; that stretch reads LHAMPGLIGGIVGAVTAACAT. The Extracellular segment spans residues 359 to 390; it reads EAVYTADGLKKMFRFEGDYATRTPSMQGGYQA. Residues 391–411 form a helical membrane-spanning segment; that stretch reads AGLCVSLAFGLVGGTVVGCIL. The Cytoplasmic portion of the chain corresponds to 412 to 467; it reads KLPIWGDPSDENCFDDEVYWELPEEDEEEHLGAANQYVTHLPENFKLPDRTEVAFK.

It belongs to the ammonium transporter (TC 2.A.49) family. Rh subfamily. In terms of assembly, homotrimer.

Its subcellular location is the apical cell membrane. Its function is as follows. Functions as an ammonia transporter. The sequence is that of Ammonium transporter Rh type C (rhcg) from Xenopus tropicalis (Western clawed frog).